A 575-amino-acid polypeptide reads, in one-letter code: Arginine--tRNA ligase (575 aa).

The 'HIGH' region motif lies at 131–141 (ANPNGPLHIGH).

The protein belongs to the class-I aminoacyl-tRNA synthetase family.

Its subcellular location is the cytoplasm. The enzyme catalyses tRNA(Arg) + L-arginine + ATP = L-arginyl-tRNA(Arg) + AMP + diphosphate. This Methanobrevibacter smithii (strain ATCC 35061 / DSM 861 / OCM 144 / PS) protein is Arginine--tRNA ligase.